The primary structure comprises 372 residues: Dof zinc finger protein DOF5.6 (372 aa).

The segment at 73 to 127 adopts a Dof-type zinc-finger fold; it reads QKCPRCESTHTKFCYYNNYSLSQPRYFCKTCRRYWTKGGTLRNIPVGGGCRKNKK. Zn(2+) is bound by residues Cys75, Cys78, Cys100, and Cys103. The segment at 117-146 is disordered; it reads PVGGGCRKNKKPSSSNSSSSTSSGKKPSNI. Low complexity predominate over residues 128-145; the sequence is PSSSNSSSSTSSGKKPSN.

The PEAR proteins (e.g. DOF2.4, DOF5.1, DOF3.2, DOF1.1, DOF5.6 and DOF5.3) form a short-range concentration gradient that peaks at protophloem sieve elements (PSE). Preferentially expressed in the vasculature of all organs, including seedlings, roots, stems, buds, leaves, flowers and siliques, and particularly in the cambium, phloem and interfascicular parenchyma cells of inflorescence stems.

Its subcellular location is the nucleus. Its function is as follows. Transcription factor that binds specifically to a 5'-AA[AG]G-3' consensus core sequence. Promotes expression. The PEAR proteins (e.g. DOF2.4, DOF5.1, DOF3.2, DOF1.1, DOF5.6 and DOF5.3) activate gene expression that promotes radial growth of protophloem sieve elements. Involved in the regulation of interfascicular cambium formation and vascular tissue development, particularly at a very early stage during inflorescence stem development; promotes both cambium activity and phloem specification, but prevents xylem specification. This chain is Dof zinc finger protein DOF5.6, found in Arabidopsis thaliana (Mouse-ear cress).